Consider the following 458-residue polypeptide: UDP-N-acetylmuramate--L-alanine ligase (458 aa).

An ATP-binding site is contributed by 118-124 (GTHGKTT).

This sequence belongs to the MurCDEF family.

It localises to the cytoplasm. It carries out the reaction UDP-N-acetyl-alpha-D-muramate + L-alanine + ATP = UDP-N-acetyl-alpha-D-muramoyl-L-alanine + ADP + phosphate + H(+). Its pathway is cell wall biogenesis; peptidoglycan biosynthesis. In terms of biological role, cell wall formation. This is UDP-N-acetylmuramate--L-alanine ligase from Clostridium botulinum (strain Langeland / NCTC 10281 / Type F).